A 270-amino-acid chain; its full sequence is Putative ABC transporter ATP-binding protein MG304 (270 aa).

The ABC transporter domain maps to 1–232 (MLQVKNLSFK…LDLFHNHHFN (232 aa)). ATP is bound at residue 36-43 (GHNGSGKS).

This sequence belongs to the ABC transporter superfamily.

This chain is Putative ABC transporter ATP-binding protein MG304, found in Mycoplasma genitalium (strain ATCC 33530 / DSM 19775 / NCTC 10195 / G37) (Mycoplasmoides genitalium).